The primary structure comprises 305 residues: Oxidoreductase swnR (305 aa).

It belongs to the NmrA-type oxidoreductase family. Isoflavone reductase subfamily.

The enzyme catalyses L-pipecolate + O2 = L-1-piperideine-6-carboxylate + H2O2 + H(+). It functions in the pathway mycotoxin biosynthesis. Functionally, oxidoreductase; part of the gene cluster that mediates the biosynthesis of swainsonine (SW), a cytotoxic fungal alkaloid and a potential cancer therapy drug. Swainsonine production occurs via a multibranched pathway and is dispensable for fungal colonization of plants and infection of insect hosts. The first step of swainsonine biosynthesis is the production of the precursor pipecolic acid (PA) via conversion of L-lysine (Lys) to 1-piperideine-6-carboxylate (P6C) by the aminotransferase swnA, the latter being further reduced to PA by the reductase swnR. PA can be converted from lysine by both the SW biosynthetic cluster and the unclustered genes such as lysine cyclodeaminase. The PKS-NRPS hybrid synthetase swnK uptakes and condensates PA and malonyl-CoA with and without skipping of the ketoreductase (KR) domain in order to produce 3 intermediates, 1-oxoindolizidine, (1S)-1-hydroxyindolizin, and (1R)-1-hydroxyindolizine; with the transisomer (1S)-1-hydroxyindolizin being predominant. The terminal thioester reductase (TE) domain of swnK is involved in reduction of the thioester bond to release the intermediate aldehydes. The oxidoreductase swnN could contribute to the reduction of 1-oxoindolizidine to (1S)-1-hydroxyindolizin and (1R)-1-hydroxyindolizine, contributing to the major route of SW production. The dioxygenase swnH2 would be responsible for the oxidization of (1R)-1-hydroxyindolizine into (1R,2S)-1,2-dihydroxyindolizine and of (1S)-1-hydroxyindolizin to yield both (1R,2S)-1,2-dihydroxyindolizine and (1S,2S)-1,2-dihydroxyindolizine. The dioxygenase swnH1 then performs the conversion of the 1,2-dihydroxyindolizine epimers to SW. This Metarhizium robertsii (strain ARSEF 23 / ATCC MYA-3075) (Metarhizium anisopliae (strain ARSEF 23)) protein is Oxidoreductase swnR.